The following is a 600-amino-acid chain: Aspartate--tRNA(Asp/Asn) ligase (600 aa).

E174 provides a ligand contact to L-aspartate. The tract at residues 198–201 (QLFK) is aspartate. R220 contributes to the L-aspartate binding site. Residues 220–222 (RDE) and Q229 contribute to the ATP site. H457 contributes to the L-aspartate binding site. E491 contacts ATP. R498 contacts L-aspartate. An ATP-binding site is contributed by 543–546 (GLDR).

Belongs to the class-II aminoacyl-tRNA synthetase family. Type 1 subfamily. As to quaternary structure, homodimer.

Its subcellular location is the cytoplasm. The enzyme catalyses tRNA(Asx) + L-aspartate + ATP = L-aspartyl-tRNA(Asx) + AMP + diphosphate. Its function is as follows. Aspartyl-tRNA synthetase with relaxed tRNA specificity since it is able to aspartylate not only its cognate tRNA(Asp) but also tRNA(Asn). Reaction proceeds in two steps: L-aspartate is first activated by ATP to form Asp-AMP and then transferred to the acceptor end of tRNA(Asp/Asn). This chain is Aspartate--tRNA(Asp/Asn) ligase, found in Burkholderia mallei (strain NCTC 10247).